Here is a 387-residue protein sequence, read N- to C-terminus: 1,3-propanediol dehydrogenase (387 aa).

This sequence belongs to the iron-containing alcohol dehydrogenase family. In terms of assembly, homooctamer. Requires Fe cation as cofactor.

The enzyme catalyses propane-1,3-diol + NAD(+) = 3-hydroxypropanal + NADH + H(+). The chain is 1,3-propanediol dehydrogenase (dhaT) from Klebsiella pneumoniae.